A 1013-amino-acid polypeptide reads, in one-letter code: Ephrin type-A receptor 5 (1013 aa).

An N-terminal signal peptide occupies residues 1-31 (MGLRGGGGRAGGPAPGWTCLLLCAALRSLLA). The Extracellular portion of the chain corresponds to 32–549 (SPGSEVNLLD…AASSDQSQIP (518 aa)). Positions 36 to 214 (EVNLLDSRTV…YYKKCPSVIR (179 aa)) constitute an Eph LBD domain. 6 N-linked (GlcNAc...) asparagine glycosylation sites follow: Asn240, Asn275, Asn345, Asn399, Asn412, and Asn437. 2 consecutive Fibronectin type-III domains span residues 333–443 (PPSA…TNQA) and 444–538 (APSP…TSPV). A helical transmembrane segment spans residues 550-570 (IIVVSVTVGVILLAVVIGFLL). The Cytoplasmic portion of the chain corresponds to 571–1013 (SGSCCDHGCG…VQLVNGMVPL (443 aa)). A phosphotyrosine; by autocatalysis mark is found at Tyr626 and Tyr632. The region spanning 651 to 912 (ITIERVIGAG…EIVSMLDKLI (262 aa)) is the Protein kinase domain. Residues 657–665 (IGAGEFGEV) and Lys683 each bind ATP. Asp776 functions as the Proton acceptor in the catalytic mechanism. Phosphotyrosine; by autocatalysis occurs at positions 809 and 958. In terms of domain architecture, SAM spans 941–1013 (GAYRSVGEWL…VQLVNGMVPL (73 aa)). Residues 1011–1013 (VPL) carry the PDZ-binding motif.

Belongs to the protein kinase superfamily. Tyr protein kinase family. Ephrin receptor subfamily. Heterotetramer upon binding of the ligand. The heterotetramer is composed of an ephrin dimer and a receptor dimer. Oligomerization is probably required to induce biological responses. Phosphorylated. Phosphorylation is stimulated by the ligand EFNA5. As to expression, detected in the 10-day embryonic brain, weaker expression in the rest of the 10-day embryo. Undetected in adult tissues.

It localises to the cell membrane. The protein localises to the cell projection. The protein resides in the axon. Its subcellular location is the dendrite. It catalyses the reaction L-tyrosyl-[protein] + ATP = O-phospho-L-tyrosyl-[protein] + ADP + H(+). Receptor tyrosine kinase which binds promiscuously GPI-anchored ephrin-A family ligands residing on adjacent cells, leading to contact-dependent bidirectional signaling into neighboring cells. The signaling pathway downstream of the receptor is referred to as forward signaling while the signaling pathway downstream of the ephrin ligand is referred to as reverse signaling. Among GPI-anchored ephrin-A ligands, EFNA5 most probably constitutes the cognate/functional ligand for EPHA5. Functions as an axon guidance molecule during development and may be involved in the development of the retinotectal, entorhino-hippocampal and hippocamposeptal pathways. Together with EFNA5 plays also a role in synaptic plasticity in adult brain through regulation of synaptogenesis. In Gallus gallus (Chicken), this protein is Ephrin type-A receptor 5 (EPHA5).